The following is a 212-amino-acid chain: uncharacterized protein (212 aa).

This is an uncharacterized protein from Aquifex aeolicus (strain VF5).